The following is a 585-amino-acid chain: Dihydroxy-acid dehydratase, mitochondrial (585 aa).

A mitochondrion-targeting transit peptide spans 1 to 20; that stretch reads MGLLTKVATSRQFSTTRCVA. Cysteine 70 provides a ligand contact to [2Fe-2S] cluster. Aspartate 102 is a binding site for Mg(2+). Cysteine 143 is a binding site for [2Fe-2S] cluster. Position 144 (aspartate 144) interacts with Mg(2+). Cysteine 221 serves as a coordination point for [2Fe-2S] cluster. Glutamate 474 is a binding site for Mg(2+). Serine 500 functions as the Proton acceptor in the catalytic mechanism.

It belongs to the IlvD/Edd family. The cofactor is [2Fe-2S] cluster. Mg(2+) is required as a cofactor.

The protein localises to the mitochondrion. It carries out the reaction (2R)-2,3-dihydroxy-3-methylbutanoate = 3-methyl-2-oxobutanoate + H2O. The enzyme catalyses (2R,3R)-2,3-dihydroxy-3-methylpentanoate = (S)-3-methyl-2-oxopentanoate + H2O. Its pathway is amino-acid biosynthesis; L-isoleucine biosynthesis; L-isoleucine from 2-oxobutanoate: step 3/4. It functions in the pathway amino-acid biosynthesis; L-valine biosynthesis; L-valine from pyruvate: step 3/4. Catalytic activity is inactivated under iron-limiting conditions. In terms of biological role, dihydroxyacid dehydratase that catalyzes the third step in the common pathway leading to biosynthesis of branched-chain amino acids. Catalyzes the dehydration of (2R,3R)-2,3-dihydroxy-3-methylpentanoate (2,3-dihydroxy-3-methylvalerate) into 2-oxo-3-methylpentanoate (2-oxo-3-methylvalerate) and of (2R)-2,3-dihydroxy-3-methylbutanoate (2,3-dihydroxyisovalerate) into 2-oxo-3-methylbutanoate (2-oxoisovalerate), the penultimate precursor to L-isoleucine and L-valine, respectively. Required for the synthesis of alpha-isopropylmalate which modulates the activity of LEU3 and subsequently regulates the expression of LEU1. This is Dihydroxy-acid dehydratase, mitochondrial from Saccharomyces cerevisiae (strain ATCC 204508 / S288c) (Baker's yeast).